The following is a 338-amino-acid chain: NLP effector protein 6 (338 aa).

The first 19 residues, 1 to 19 (MRFTTIFWISLTVLATVRA), serve as a signal peptide directing secretion. Positions 68–119 (LTLSPSASSPAKRNVTLPPDTTMRPDPRQTEPPTEAPTPASTPAPTPDPGPW) are disordered. Asn81 carries an N-linked (GlcNAc...) asparagine glycan. Pro residues predominate over residues 101-117 (TEAPTPASTPAPTPDPG). Positions 205–215 (AIMYSWYFPKD) match the Conserved undecapeptide motif I motif. The short motif at 222–227 (GHRHDW) is the Hepta-peptide GHRHDWE motif II element.

The protein belongs to the Necrosis inducing protein (NPP1) family.

The protein resides in the secreted. Its function is as follows. Secreted effector that contributes strongly to virulence during infection by P.capsici. Causes large necrotic areas in both host C.annuum and non-host N.benthamiana. The chain is NLP effector protein 6 from Phytophthora capsici.